The sequence spans 193 residues: Dense granule protein 2 (193 aa).

Asn-4 carries an N-linked (GlcNAc...) asparagine glycan. The helical transmembrane segment at 14 to 34 (FSPLTVVMLAVTLVAFMGVPL) threads the bilayer. An N-linked (GlcNAc...) asparagine glycan is attached at Asn-74. Residues 75–140 (SSELAGSRDK…APKPVPVRSA (66 aa)) form a disordered region. The segment covering 88–98 (EAEEEAAEVET) has biased composition (acidic residues). A helical membrane pass occupies residues 153–173 (HRVIGTAVIAAVVAALLWKFS). A disordered region spans residues 174-193 (RRRSGAPREGGENENGGEEK).

Belongs to the Gra6 family.

It localises to the membrane. The sequence is that of Dense granule protein 2 (DG2) from Neospora caninum (Coccidian parasite).